We begin with the raw amino-acid sequence, 645 residues long: Zinc finger protein 235 (645 aa).

The 79-residue stretch at 8-86 folds into the KRAB domain; sequence VTFRDVAVVF…TSHDVNKLAR (79 aa). Disordered stretches follow at residues 112–144 and 255–280; these read GAEQ…EFLS and KKSP…SVHP. The span at 129 to 144 shows a compositional bias: polar residues; the sequence is LPSNHSSSSDNQEFLS. C2H2-type zinc fingers lie at residues 285-307, 313-335, 341-363, 369-391, 397-419, 425-447, 453-475, 481-503, 509-531, 537-559, 565-587, 593-615, and 621-643; these read YWCH…QRVH, YRCD…RRVH, YKCE…ERIH, YKCG…QRVH, YECN…QRVH, YKCE…QRVH, FHCS…QRIH, YRCE…QSVH, YKCG…HSVH, FKCN…QRVH, YKCD…QRIH, FKCE…QRVH, and YTCQ…QRVH.

Belongs to the krueppel C2H2-type zinc-finger protein family.

It is found in the nucleus. May be involved in transcriptional regulation. The sequence is that of Zinc finger protein 235 (Znf235) from Mus musculus (Mouse).